Here is a 668-residue protein sequence, read N- to C-terminus: Metastasis-associated protein MTA2 (668 aa).

The BAH domain occupies 1-144; sequence MAANMYRVGD…PVQKTLLADQ (144 aa). Ser52 and Ser54 each carry phosphoserine. The 112-residue stretch at 145 to 256 folds into the ELM2 domain; the sequence is GEIRVGCKFQ…KAMSTLVPQG (112 aa). Lys152 is subject to N6-acetyllysine. An SANT domain is found at 263–315; sequence DEMEEWSASEAMLFEEALEKYGKDFNDIRQDFLPWKSLASIVQFYYMWKTTDR. Residues 367-394 form a GATA-type; atypical zinc finger; the sequence is CESCHTTQSAQWYAWGPPNMQCRLCASC. Residues 412–437 form a disordered region; the sequence is GAARGTTEPHSRGHLSRPEAQSLSPY. Phosphoserine is present on residues Ser433 and Ser435. Position 460 is an N6-acetyllysine (Lys460). Lys492 is covalently cross-linked (Glycyl lysine isopeptide (Lys-Gly) (interchain with G-Cter in SUMO2 and SUMO3); alternate). Lys492 participates in a covalent cross-link: Glycyl lysine isopeptide (Lys-Gly) (interchain with G-Cter in SUMO2); alternate. A Glycyl lysine isopeptide (Lys-Gly) (interchain with G-Cter in SUMO2) cross-link involves residue Lys508. N6-acetyllysine is present on residues Lys522 and Lys531. Residue Thr534 is modified to Phosphothreonine. Residues Lys559 and Lys595 each participate in a glycyl lysine isopeptide (Lys-Gly) (interchain with G-Cter in SUMO2) cross-link. 2 disordered regions span residues 580–599 and 647–668; these read ASGI…LNPA and PPVP…VLED.

Belongs to the metastasis-associated protein family. As to quaternary structure, component of the nucleosome remodeling and deacetylase (NuRD) repressor complex, composed of core proteins MTA1, MTA2, MTA3, RBBP4, RBBP7, HDAC1, HDAC2, MBD2, MBD3, and peripherally associated proteins CDK2AP1, CDK2AP2, GATAD2A, GATAD2B, CHD3, CHD4 and CHD5. The exact stoichiometry of the NuRD complex is unknown, and some subunits such as MBD2 and MBD3, GATAD2A and GATAD2B, and CHD3, CHD4 and CHD5 define mutually exclusive NuRD complexes. Interacts with CHD3. Interacts with CHD4. Interacts with GATAD2A. Interacts with HDAC7. Interacts with MBD3. Interacts with p53/TP53. Interacts with MINT. Interacts with PIMREG. Interacts with NACC2. Interacts with ERCC6. Interacts with PWWP2B. Interacts with transcription factor BCL11A.

It localises to the nucleus. In terms of biological role, may function as a transcriptional coregulator. Acts as a component of the histone deacetylase NuRD complex which participates in the remodeling of chromatin. The protein is Metastasis-associated protein MTA2 (Mta2) of Mus musculus (Mouse).